The following is a 390-amino-acid chain: MAAPNLITPLRDICVKVVAANFEGCPTFGPLPDKYVKRIIDILPLDLPLELVGSLIADEDYWRRRSQARWKNCEVAAHGYSWKQLFFERNLMEFLEQYDPAVTDLSSLKRLLTYSRRFVQTVHIRQLPSHLDLQILFECMVNTPSSLALSYNLKEVGMDYDRSLFGMKLSDCRALAKALEHTETLTHLDLSNNSLDDDKVRMLASGLVENLSITHLNLSHNKIADRGVRALAKLLDGHSVISLLELHDNQIHTEGAESLARAFKSNQCLLSVNLRLNRMGDEGCKAVVESVRGSPTLQRLNISANAAGPGTAAAVVALLRLNNTLTELDVSCNQFGEDACGNVRRALEQNGSVRLMDVRMTGINPDDEMAIAENLRARQERVDKARVLGK.

LRR repeat units follow at residues 182–205 (TETLTHLDLSNNSLDDDKVRMLAS), 210–233 (NLSITHLNLSHNKIADRGVRALAK), and 238–261 (HSVISLLELHDNQIHTEGAESLAR).

Belongs to the DRC5 family. Component of the nexin-dynein regulatory complex (N-DRC). Interacts with DRC1, DRC2, DRC3, DRC4, DRC7 and DRC11.

The protein localises to the cell projection. The protein resides in the cilium. It localises to the flagellum. Its subcellular location is the cytoplasm. It is found in the cytoskeleton. The protein localises to the flagellum axoneme. In terms of biological role, component of the nexin-dynein regulatory complex (N-DRC) a key regulator of ciliary/flagellar motility which maintains the alignment and integrity of the distal axoneme and regulates microtubule sliding in motile axonemes. May play a role in the assembly of N-DRC. The chain is Dynein regulatory complex subunit 5 from Chlamydomonas reinhardtii (Chlamydomonas smithii).